The primary structure comprises 284 residues: RNase adapter protein RapZ (284 aa).

An ATP-binding site is contributed by Gly-8–Ser-15. Asp-56–Asn-59 is a GTP binding site. The RNA-binding stretch occupies residues Arg-266–Thr-284.

It belongs to the RapZ-like family. RapZ subfamily. In terms of assembly, homotrimer.

Functionally, modulates the synthesis of GlmS, by affecting the processing and stability of the regulatory small RNA GlmZ. When glucosamine-6-phosphate (GlcN6P) concentrations are high in the cell, RapZ binds GlmZ and targets it to cleavage by RNase E. Consequently, GlmZ is inactivated and unable to activate GlmS synthesis. Under low GlcN6P concentrations, RapZ is sequestered and inactivated by an other regulatory small RNA, GlmY, preventing GlmZ degradation and leading to synthesis of GlmS. This Salmonella typhimurium (strain LT2 / SGSC1412 / ATCC 700720) protein is RNase adapter protein RapZ.